Here is a 90-residue protein sequence, read N- to C-terminus: Putative membrane protein insertion efficiency factor (90 aa).

Positions 68–90 are disordered; sequence VPAHFSLRRNPQYKEEDHRGKKR. Residues 79 to 90 show a composition bias toward basic and acidic residues; the sequence is QYKEEDHRGKKR.

It belongs to the UPF0161 family.

The protein resides in the cell membrane. Could be involved in insertion of integral membrane proteins into the membrane. This is Putative membrane protein insertion efficiency factor from Lactiplantibacillus plantarum (strain ATCC BAA-793 / NCIMB 8826 / WCFS1) (Lactobacillus plantarum).